We begin with the raw amino-acid sequence, 1863 residues long: Breast cancer type 1 susceptibility protein (1863 aa).

Residue Met-1 is modified to N-acetylmethionine. The segment at 24-65 (CPICLELIKEPVSTKCDHIFCKFCMLKLLNQKKGPSQCPLCK) adopts an RING-type zinc-finger fold. A Glycyl lysine isopeptide (Lys-Gly) (interchain with G-Cter in SUMO2) cross-link involves residue Lys-109. Ser-114 bears the Phosphoserine mark. Residues 230 to 270 (ETDVTNTEHHQPSNNDLNTTEKRAAERHPEKYQGSSVSNLH) are disordered. Residues 248 to 260 (TTEKRAAERHPEK) show a composition bias toward basic and acidic residues. Lys-301 participates in a covalent cross-link: Glycyl lysine isopeptide (Lys-Gly) (interchain with G-Cter in SUMO2). Positions 306-338 (NKSKQPGLARSQHNRWAGSKETCNDRRTPSTEK) are disordered. Positions 327–338 (TCNDRRTPSTEK) are enriched in basic and acidic residues. A Glycyl lysine isopeptide (Lys-Gly) (interchain with G-Cter in SUMO2) cross-link involves residue Lys-339. A phosphoserine mark is found at Ser-395, Ser-398, Ser-423, and Ser-434. Glycyl lysine isopeptide (Lys-Gly) (interchain with G-Cter in SUMO2) cross-links involve residues Lys-443, Lys-459, and Lys-519. The span at 534–544 (QGTNQTEQNGQ) shows a compositional bias: low complexity. The disordered stretch occupies residues 534–570 (QGTNQTEQNGQVMNITNSGHENKTKGDSIQNEKNPNP). Position 551 is a phosphoserine (Ser-551). Residues Lys-583 and Lys-654 each participate in a glycyl lysine isopeptide (Lys-Gly) (interchain with G-Cter in SUMO2) cross-link. Residues 654–709 (KYNQMPVRHSRNLQLMEGKEPATGAKKSNKPNEQTSKRHDSDTFPELKLTNAPGSF) form a disordered region. Residues Ser-694, Ser-708, and Ser-725 each carry the phosphoserine modification. Residues Lys-734 and Lys-739 each participate in a glycyl lysine isopeptide (Lys-Gly) (interchain with G-Cter in SUMO2) cross-link. Phosphoserine occurs at positions 753 and 840. Glycyl lysine isopeptide (Lys-Gly) (interchain with G-Cter in SUMO2) cross-links involve residues Lys-918 and Lys-987. Ser-988 bears the Phosphoserine; by CHEK2 mark. A Phosphoserine modification is found at Ser-1009. Lys-1079 participates in a covalent cross-link: Glycyl lysine isopeptide (Lys-Gly) (interchain with G-Cter in SUMO2). Ser-1143 is subject to Phosphoserine; by ATR; in vitro. A disordered region spans residues 1181–1216 (VQKGELSRSPSPFTHTHLAQGYRRGAKKLESSEENL). Phosphoserine is present on residues Ser-1189, Ser-1191, Ser-1211, Ser-1217, and Ser-1218. Position 1280 is a phosphoserine; by ATR; in vitro (Ser-1280). The tract at residues 1322–1387 (KQMRHQSESQ…VSEDCSGLSS (66 aa)) is disordered. 3 positions are modified to phosphoserine: Ser-1328, Ser-1336, and Ser-1342. Over residues 1373–1387 (ESETSVSEDCSGLSS) the composition is skewed to polar residues. Residue Ser-1387 is modified to Phosphoserine; by ATM and ATR. Position 1394 is a phosphothreonine; by ATR; in vitro (Thr-1394). The interaction with PALB2 stretch occupies residues 1397 to 1424 (RDTMQHNLIKLQQEMAELEAVLEQHGSQ). Phosphoserine; by ATM and ATR is present on Ser-1423. The tract at residues 1440–1505 (EDLRNPEQST…SSPSKCPSLD (66 aa)) is disordered. A compositionally biased stretch (polar residues) spans 1445 to 1470 (PEQSTSEKAVLTSQKSSEYPISQNPE). At Ser-1457 the chain carries Phosphoserine; by ATR; in vitro. Ser-1524 carries the post-translational modification Phosphoserine; by ATM. Ser-1542 is modified (phosphoserine). Residues 1565–1596 (ESGISLFSDDPESDPSEDRAPESARVGNIPSS) are disordered. 2 consecutive BRCT domains span residues 1642–1736 (STER…DFEV) and 1756–1855 (QDRK…TYLI).

In terms of assembly, heterodimer with BARD1. Part of the BRCA1-associated genome surveillance complex (BASC), which contains BRCA1, MSH2, MSH6, MLH1, ATM, BLM, PMS2 and the MRE11-RAD50-NBN protein (MRN) complex. This association could be a dynamic process changing throughout the cell cycle and within subnuclear domains. Component of the BRCA1-A complex, at least composed of BRCA1, BARD1, UIMC1/RAP80, ABRAXAS1, BRCC3/BRCC36, BABAM2 and BABAM1/NBA1. Interacts (via the BRCT domains) with ABRAXAS1 (phosphorylated form); this is important for recruitment to sites of DNA damage. Can form a heterotetramer with two molecules of ABRAXAS1 (phosphorylated form). Component of the BRCA1-RBBP8 complex. Interacts (via the BRCT domains) with RBBP8 ('Ser-327' phosphorylated form); the interaction ubiquitinates RBBP8, regulates CHEK1 activation, and involves RBBP8 in BRCA1-dependent G2/M checkpoint control on DNA damage. Associates with RNA polymerase II holoenzyme. Interacts with SMC1A, NELFB, DCLRE1C, CLSPN. Interacts with CHEK1, CHEK2, BAP1, BRCC3, UBXN1 and PCLAF. Interacts (via BRCT domains) with BRIP1 (phosphorylated form). Interacts with FANCD2 (ubiquitinated form). Interacts with H2AX (phosphorylated on 'Ser-140'). Interacts (via the BRCT domains) with ACACA (phosphorylated form); the interaction prevents dephosphorylation of ACACA. Part of a BRCA complex containing BRCA1, BRCA2 and PALB2. Interacts directly with PALB2; the interaction is essential for its function in HRR. Interacts directly with BRCA2; the interaction occurs only in the presence of PALB2 which serves as the bridging protein. Interacts (via the BRCT domains) with LMO4; the interaction represses the transcriptional activity of BRCA1. Interacts (via the BRCT domains) with CCAR2 (via N-terminus); the interaction represses the transcriptional activator activity of BRCA1. Interacts with EXD2. Interacts (via C-terminus) with DHX9; this interaction is direct and links BRCA1 to the RNA polymerase II holoenzyme. Interacts with DNA helicase ZGRF1; the interaction is increased following DNA damage induction. Post-translationally, phosphorylated in response to IR, UV, and various stimuli that cause checkpoint activation, probably by ATM or ATR. Phosphorylation at Ser-988 by CHEK2 regulates mitotic spindle assembly. Phosphorylation by AURKA regulates centrosomal microtubule nucleation. Autoubiquitinated, undergoes 'Lys-6'-linked polyubiquitination. 'Lys-6'-linked polyubiquitination does not promote degradation. Isoform 1 and isoform 3 are widely expressed. Isoform 3 is reduced or absent in several breast and ovarian cancer cell lines.

Its subcellular location is the nucleus. The protein localises to the chromosome. The protein resides in the cytoplasm. The enzyme catalyses S-ubiquitinyl-[E2 ubiquitin-conjugating enzyme]-L-cysteine + [acceptor protein]-L-lysine = [E2 ubiquitin-conjugating enzyme]-L-cysteine + N(6)-ubiquitinyl-[acceptor protein]-L-lysine.. The protein operates within protein modification; protein ubiquitination. Its activity is regulated as follows. The E3 ubiquitin-protein ligase activity is inhibited by phosphorylation by AURKA. Activity is increased by phosphatase treatment. E3 ubiquitin-protein ligase that specifically mediates the formation of 'Lys-6'-linked polyubiquitin chains and plays a central role in DNA repair by facilitating cellular responses to DNA damage. It is unclear whether it also mediates the formation of other types of polyubiquitin chains. The BRCA1-BARD1 heterodimer coordinates a diverse range of cellular pathways such as DNA damage repair, ubiquitination and transcriptional regulation to maintain genomic stability. Regulates centrosomal microtubule nucleation. Required for appropriate cell cycle arrests after ionizing irradiation in both the S-phase and the G2 phase of the cell cycle. Required for FANCD2 targeting to sites of DNA damage. Inhibits lipid synthesis by binding to inactive phosphorylated ACACA and preventing its dephosphorylation. Contributes to homologous recombination repair (HRR) via its direct interaction with PALB2, fine-tunes recombinational repair partly through its modulatory role in the PALB2-dependent loading of BRCA2-RAD51 repair machinery at DNA breaks. Component of the BRCA1-RBBP8 complex which regulates CHEK1 activation and controls cell cycle G2/M checkpoints on DNA damage via BRCA1-mediated ubiquitination of RBBP8. Acts as a transcriptional activator. This Homo sapiens (Human) protein is Breast cancer type 1 susceptibility protein (BRCA1).